Consider the following 981-residue polypeptide: MPHGDLPLPPSYRPHEVKKAVEEFWRRNRIFEKWKSWRGGPKFTFLEGPPTTNGMPHVGHIRGRTYKDVVIRFYRLLGYDVWVQGGWDMQGMPVEWEVEKKLKLRSKKDIEQFGLEKFALECNSLVEEYLAYWREWGTKRLGLWLDLENAYETRQPHYLQYAWRIVKRAHELGLLTEDYRVLWFCPRCETSLSDHEVALGYDEREDPSIYVKFRVEGGVDEYLVIWTTTPWTIVDNEAVAVHPDYVYAKVEVEVGGRREYWWLAEALVPSLMAKFGIKTWRVVETKKGVELAGVRYIHPLAEEVPERASRPHQVVTAEFVTLEQGTGLVHIAPGHGPEDFELAKKYGLPVTNSVEINGIYNELGGRYKGKHVYDVDKEVTRDLRSKGLLVFEEKIRHEYPHCWRCGSKLILRADRQWFIAISRIRDKMYAELQKVNVVPTKLRDRFDIFVQNARDWNISRSRVWGTPLPVWRCKKDGRILVIGSLEELKKLAKELPPVDDFKLVHRPWIDQVKISAHDCDEWVREPYVMDVWLDSGIAWIAAVDGENNRDLWEKLFPYDFVTEGIDQTRGWFYSLLATSVLYTGRAPYKNVLIQGLILDKHGQKMSKSKGNVIWAKDLFEKYGADPVRLYILSKVAPWEDLSFDPDEVKYVIGDLNILWNVVKFADTYMSLDGFDAEKYPLSQWLEKGLEEDKWILSELNIMISEFTNFVKNFEFHKAAALWREFVVETLSHRYIRLLRRRVWSEEPSPDKYAAYAVLHDVLKKVLILGSILVPFITEYLWQAYVRKYEKNAPESVHLAQYPAAGSYDKELIYAYRELFAVFSALAEARNKAGIKLRWPIREAYVNGAKYAERYTELLKYLGNVKEVKVGRRPDYLCVKEGELEVCVPDKIEPELYYEALARELIRRIQVMRKETGLEISDEIHVVVETNSDDIKKAVEQYRDYIARETRAVKLIIDAVSQGKEWDISGEKVKIEIRKAQA.

The 'HIGH' region motif lies at 50–60 (PTTNGMPHVGH). The 'KMSKS' region signature appears at 604–608 (KMSKS). Lysine 607 contributes to the ATP binding site.

Belongs to the class-I aminoacyl-tRNA synthetase family. IleS type 2 subfamily. As to quaternary structure, monomer. Requires Zn(2+) as cofactor.

It is found in the cytoplasm. It catalyses the reaction tRNA(Ile) + L-isoleucine + ATP = L-isoleucyl-tRNA(Ile) + AMP + diphosphate. Its function is as follows. Catalyzes the attachment of isoleucine to tRNA(Ile). As IleRS can inadvertently accommodate and process structurally similar amino acids such as valine, to avoid such errors it has two additional distinct tRNA(Ile)-dependent editing activities. One activity is designated as 'pretransfer' editing and involves the hydrolysis of activated Val-AMP. The other activity is designated 'posttransfer' editing and involves deacylation of mischarged Val-tRNA(Ile). The polypeptide is Isoleucine--tRNA ligase (Pyrobaculum aerophilum (strain ATCC 51768 / DSM 7523 / JCM 9630 / CIP 104966 / NBRC 100827 / IM2)).